Here is a 598-residue protein sequence, read N- to C-terminus: uncharacterized protein (598 aa).

Residues 1–23 (MSHEGSRQARDRGVTRSKAEKAR) show a composition bias toward basic and acidic residues. 3 disordered regions span residues 1-32 (MSHE…VPQV), 151-190 (FHNE…VTPR), and 222-241 (PSKE…SPQS). The segment covering 225–235 (ESLRSTAEGER) has biased composition (basic and acidic residues). 2 positions are modified to phosphoserine: Ser238 and Ser242. Disordered stretches follow at residues 366 to 396 (RRSQ…SSPR) and 551 to 571 (AEEG…VSKP). 2 stretches are compositionally biased toward polar residues: residues 369–386 (QAGT…SSRA) and 558–569 (APEQQPIQTGVS).

This is an uncharacterized protein from Mus musculus (Mouse).